The following is a 320-amino-acid chain: 4-hydroxyproline 2-epimerase (320 aa).

Cys-98 (proton acceptor) is an active-site residue. Substrate contacts are provided by residues 99–100, His-218, and Asp-242; that span reads GH. The active-site Proton donor is Cys-246. A substrate-binding site is contributed by 247 to 248; it reads GT.

This sequence belongs to the proline racemase family.

The catalysed reaction is trans-4-hydroxy-L-proline = cis-4-hydroxy-D-proline. Catalyzes the epimerization of trans-4-hydroxy-L-proline (t4LHyp) to cis-4-hydroxy-D-proline (c4DHyp). Is likely involved in a degradation pathway that converts t4LHyp to alpha-ketoglutarate. Displays no proline racemase activity. In Burkholderia pseudomallei (strain 1710b), this protein is 4-hydroxyproline 2-epimerase.